The sequence spans 537 residues: CTP synthase (537 aa).

The tract at residues 1-268 (MPFKCIFLTG…ANFIGEKLKL (268 aa)) is amidoligase domain. CTP is bound at residue serine 14. Serine 14 serves as a coordination point for UTP. ATP is bound by residues 15 to 20 (SLGKGL) and aspartate 72. Residues aspartate 72 and glutamate 142 each contribute to the Mg(2+) site. CTP-binding positions include 149–151 (DIE), 188–193 (KSKPTQ), and lysine 224. UTP-binding positions include 188-193 (KSKPTQ) and lysine 224. The 241-residue stretch at 293–533 (KIGVVGKYVQ…IEAALVYSKD (241 aa)) folds into the Glutamine amidotransferase type-1 domain. Glycine 352 is an L-glutamine binding site. The active-site Nucleophile; for glutamine hydrolysis is the cysteine 379. L-glutamine is bound by residues 380 to 383 (LGMQ), glutamate 403, and arginine 461. Residues histidine 506 and glutamate 508 contribute to the active site.

This sequence belongs to the CTP synthase family. Homotetramer.

The catalysed reaction is UTP + L-glutamine + ATP + H2O = CTP + L-glutamate + ADP + phosphate + 2 H(+). The enzyme catalyses L-glutamine + H2O = L-glutamate + NH4(+). It carries out the reaction UTP + NH4(+) + ATP = CTP + ADP + phosphate + 2 H(+). It participates in pyrimidine metabolism; CTP biosynthesis via de novo pathway; CTP from UDP: step 2/2. With respect to regulation, allosterically activated by GTP, when glutamine is the substrate; GTP has no effect on the reaction when ammonia is the substrate. The allosteric effector GTP functions by stabilizing the protein conformation that binds the tetrahedral intermediate(s) formed during glutamine hydrolysis. Inhibited by the product CTP, via allosteric rather than competitive inhibition. Its function is as follows. Catalyzes the ATP-dependent amination of UTP to CTP with either L-glutamine or ammonia as the source of nitrogen. Regulates intracellular CTP levels through interactions with the four ribonucleotide triphosphates. This Chlamydia pneumoniae (Chlamydophila pneumoniae) protein is CTP synthase.